Here is a 2623-residue protein sequence, read N- to C-terminus: Probable polyketide synthase 31 (2623 aa).

Residues 1–11 (MTQNIDNNNNK) show a composition bias toward low complexity. The tract at residues 1-25 (MTQNIDNNNNKLIRDRNDDDDVDRN) is disordered. The Ketosynthase family 3 (KS3) domain occupies 27–461 (DGDVAVIGIG…GSNVCLILSE (435 aa)). Active-site for beta-ketoacyl synthase activity residues include C199, H338, and H384. Residues 666–699 (GVSADIIIGHSLGEVSSPYCSGMIDFQTLCYLIY) form an acyl/malonyl transferase region. S676 acts as the For acyl/malonyl transferase activity in catalysis. Positions 959-1088 (HEKIKSEGPS…GNFNLTKHNS (130 aa)) are N-terminal hotdog fold. A PKS/mFAS DH domain is found at 959 to 1267 (HEKIKSEGPS…CALVSLGSNP (309 aa)). H1000 serves as the catalytic Proton acceptor; for dehydratase activity. Residues 1105-1267 (NFTSISKQDF…CALVSLGSNP (163 aa)) are C-terminal hotdog fold. The active-site Proton donor; for dehydratase activity is D1177. The region spanning 2524–2601 (ANNEIIHSTI…QSIEIIKSAK (78 aa)) is the Carrier domain. S2561 is modified (O-(pantetheine 4'-phosphoryl)serine). Positions 2600-2623 (AKNNNKNNNNNNNKNNSNNKNKNN) are disordered. Positions 2601-2623 (KNNNKNNNNNNNKNNSNNKNKNN) are enriched in low complexity.

Pantetheine 4'-phosphate is required as a cofactor.

Functionally, probable polyketide synthase. This Dictyostelium discoideum (Social amoeba) protein is Probable polyketide synthase 31 (pks31).